The chain runs to 262 residues: 14-3-3 protein homolog (262 aa).

The protein belongs to the 14-3-3 family.

This chain is 14-3-3 protein homolog, found in Trichoderma harzianum (Hypocrea lixii).